The chain runs to 317 residues: Probable cell division protein WhiA (317 aa).

Residues 278–311 (SLQGLGELLDPQVGKSGVNHRLRKIGEKADELRQ) constitute a DNA-binding region (H-T-H motif).

This sequence belongs to the WhiA family.

Its function is as follows. Involved in cell division and chromosome segregation. The sequence is that of Probable cell division protein WhiA from Lachnospira eligens (strain ATCC 27750 / DSM 3376 / VPI C15-48 / C15-B4) (Eubacterium eligens).